Here is a 305-residue protein sequence, read N- to C-terminus: tRNA pseudouridine synthase B (305 aa).

The active-site Nucleophile is Asp48.

This sequence belongs to the pseudouridine synthase TruB family. Type 1 subfamily.

The enzyme catalyses uridine(55) in tRNA = pseudouridine(55) in tRNA. In terms of biological role, responsible for synthesis of pseudouridine from uracil-55 in the psi GC loop of transfer RNAs. In Pseudomonas fluorescens (strain Pf0-1), this protein is tRNA pseudouridine synthase B.